The primary structure comprises 464 residues: AAC-rich mRNA clone AAC11 protein (464 aa).

Residues 1 to 15 show a composition bias toward polar residues; that stretch reads MSTPTLPNLSQLHGI. Disordered regions lie at residues 1–112 and 125–464; these read MSTP…HGTN and SLPQ…SFFH. 3 stretches are compositionally biased toward low complexity: residues 16–65, 78–88, and 130–160; these read QNQS…QQPQ, NPNGLGLMGHN, and INNNNNNNNNNSNINNNNNNSNNNNNNNNSN. A compositionally biased stretch (polar residues) spans 161–174; that stretch reads LGINSSPTQSSANS. 3 DNA-binding regions (a.T hook) span residues 177-189, 198-210, and 224-236; these read KRSRGRPRKNPPS, KRKRGRPPKMDEE, and NKKRGRPKKPKDE. Positions 240 to 253 are enriched in polar residues; it reads DYNNTSFSDSNTDG. The segment at residues 255 to 267 is a DNA-binding region (a.T hook 4); it reads PKKRGRPPKAKGD. Positions 276 to 428 are enriched in low complexity; that stretch reads NTLGNGILNS…NNAGNLGNLG (153 aa). Residues 433 to 464 are compositionally biased toward polar residues; that stretch reads LHSSDPNNPNAQKSFPDSTNTMDFQPNFSFFH.

The polypeptide is AAC-rich mRNA clone AAC11 protein (AAC11) (Dictyostelium discoideum (Social amoeba)).